Here is a 366-residue protein sequence, read N- to C-terminus: Histidinol-phosphate aminotransferase 2 (366 aa).

Positions 1 to 11 (MQVKDQLSSLQ) are enriched in polar residues. The disordered stretch occupies residues 1–21 (MQVKDQLSSLQPYKPGKSPEQ). N6-(pyridoxal phosphate)lysine is present on K222.

It belongs to the class-II pyridoxal-phosphate-dependent aminotransferase family. Histidinol-phosphate aminotransferase subfamily. In terms of assembly, homodimer. Pyridoxal 5'-phosphate is required as a cofactor.

It catalyses the reaction L-histidinol phosphate + 2-oxoglutarate = 3-(imidazol-4-yl)-2-oxopropyl phosphate + L-glutamate. Its pathway is amino-acid biosynthesis; L-histidine biosynthesis; L-histidine from 5-phospho-alpha-D-ribose 1-diphosphate: step 7/9. In Bacillus cereus (strain ATCC 10987 / NRS 248), this protein is Histidinol-phosphate aminotransferase 2.